Reading from the N-terminus, the 426-residue chain is D-tagatose-1,6-bisphosphate aldolase subunit KbaZ (426 aa).

Belongs to the GatZ/KbaZ family. KbaZ subfamily. As to quaternary structure, forms a complex with KbaY.

Its pathway is carbohydrate metabolism; D-tagatose 6-phosphate degradation; D-glyceraldehyde 3-phosphate and glycerone phosphate from D-tagatose 6-phosphate: step 2/2. Functionally, component of the tagatose-1,6-bisphosphate aldolase KbaYZ that is required for full activity and stability of the Y subunit. Could have a chaperone-like function for the proper and stable folding of KbaY. When expressed alone, KbaZ does not show any aldolase activity. This chain is D-tagatose-1,6-bisphosphate aldolase subunit KbaZ, found in Escherichia coli O7:K1 (strain IAI39 / ExPEC).